Reading from the N-terminus, the 610-residue chain is UvrABC system protein C (610 aa).

One can recognise a GIY-YIG domain in the interval 16-94; sequence SQPGVYRMYD…IKLYQPRYNV (79 aa). A UVR domain is found at 204 to 239; the sequence is DQVINQLVSRMEQASQNLAFEEAARLRDQIQAVRRV.

This sequence belongs to the UvrC family. In terms of assembly, interacts with UvrB in an incision complex.

The protein localises to the cytoplasm. Functionally, the UvrABC repair system catalyzes the recognition and processing of DNA lesions. UvrC both incises the 5' and 3' sides of the lesion. The N-terminal half is responsible for the 3' incision and the C-terminal half is responsible for the 5' incision. This Cronobacter sakazakii (strain ATCC BAA-894) (Enterobacter sakazakii) protein is UvrABC system protein C.